A 502-amino-acid chain; its full sequence is Aspartyl/glutamyl-tRNA(Asn/Gln) amidotransferase subunit B (502 aa).

Belongs to the GatB/GatE family. GatB subfamily. In terms of assembly, heterotrimer of A, B and C subunits.

It carries out the reaction L-glutamyl-tRNA(Gln) + L-glutamine + ATP + H2O = L-glutaminyl-tRNA(Gln) + L-glutamate + ADP + phosphate + H(+). The catalysed reaction is L-aspartyl-tRNA(Asn) + L-glutamine + ATP + H2O = L-asparaginyl-tRNA(Asn) + L-glutamate + ADP + phosphate + 2 H(+). In terms of biological role, allows the formation of correctly charged Asn-tRNA(Asn) or Gln-tRNA(Gln) through the transamidation of misacylated Asp-tRNA(Asn) or Glu-tRNA(Gln) in organisms which lack either or both of asparaginyl-tRNA or glutaminyl-tRNA synthetases. The reaction takes place in the presence of glutamine and ATP through an activated phospho-Asp-tRNA(Asn) or phospho-Glu-tRNA(Gln). This is Aspartyl/glutamyl-tRNA(Asn/Gln) amidotransferase subunit B from Brucella suis (strain ATCC 23445 / NCTC 10510).